Here is a 627-residue protein sequence, read N- to C-terminus: MNITQAYKRSLWWSMDMVGATGSVERKMLTAVGLQFLAAGGMAFLTVFTAGTVQLIGVGGMLALSVVAFYNTYLIAEADFVEPLVALEDAADDIAAGEFERADIPSSKRDDEIASLVASFDGMQSNLEVASRQADALARQAFDDPALDESVPGAFGESITEMADSLEAYTAELEDKTAELEHQQAELERQSEQLRALVDALSEATDAARAGDLTATVDAAALDVTDDHRAAVEDFNQLLETLADTISDIQSFSDAVLAVSRTTDERVDAVADRSAAVSESVTEIADGANQQTNQLNNIAAEMDTVSATVEEIAASANDVAKTAQAAADRGEDGRGEVEETIEALRALREQSQAVAETVESLAAEVERIDGITALIEDIAEETNMLALNASIEAARTGSDGDGFAVVADEVKDLAEETREQAADISEIVDAVTEKAEDASIAIGEVDAEVERKITKAEGVLRDFEAIVDEVANVNHAVQEISDATDQGAQSVTDVVGMVEEVASVSEETAAESDTVADNAAEQTDATDEVADQMDELAEQTAALAGMLDDFTVPADAGTADQSVADDSPTAQPPAADDEPAAAVVDQPQPASDAEDEEGVPDSGGESVAVSDGGWADDRSSFTWADSQ.

The next 2 helical transmembrane spans lie at 28–48 and 55–75; these read MLTAVGLQFLAAGGMAFLTVF and LIGVGGMLALSVVAFYNTYLI. HAMP domains lie at 78–132 and 192–247; these read ADFV…VASR and EQLR…DTIS. One can recognise a Methyl-accepting transducer domain in the interval 266-502; that stretch reads RVDAVADRSA…DVVGMVEEVA (237 aa). Residues E310, E416, and E507 each carry the glutamate methyl ester (Glu) modification. Disordered stretches follow at residues 505–527 and 557–627; these read SEETAAESDTVADNAAEQTDATD and GTAD…ADSQ. Low complexity predominate over residues 580 to 590; the sequence is AAAVVDQPQPA.

The protein belongs to the methyl-accepting chemotaxis (MCP) protein family. As to quaternary structure, interacts with CheA, CheY and CheW1. Methylated by CheR.

It is found in the cell membrane. Functionally, mediates bacteriorhodopsin- and halorhodopsin-dependent photoresponses by detecting membrane potential changes. Probably transduces the signal to the histidine kinase CheA. This Halobacterium salinarum (strain ATCC 29341 / DSM 671 / R1) protein is Transducer protein MpcT (mpcT).